The primary structure comprises 83 residues: NAD(P)H-quinone oxidoreductase subunit L (83 aa).

A run of 2 helical transmembrane segments spans residues 15 to 35 (LMVLAAYVLLGGLYLIVVPLL) and 53 to 73 (LSAYGMVFLFFPGLILFAPFL).

The protein belongs to the complex I NdhL subunit family. As to quaternary structure, NDH-1 can be composed of about 15 different subunits; different subcomplexes with different compositions have been identified which probably have different functions.

The protein localises to the cellular thylakoid membrane. It catalyses the reaction a plastoquinone + NADH + (n+1) H(+)(in) = a plastoquinol + NAD(+) + n H(+)(out). The enzyme catalyses a plastoquinone + NADPH + (n+1) H(+)(in) = a plastoquinol + NADP(+) + n H(+)(out). Its function is as follows. NDH-1 shuttles electrons from an unknown electron donor, via FMN and iron-sulfur (Fe-S) centers, to quinones in the respiratory and/or the photosynthetic chain. The immediate electron acceptor for the enzyme in this species is believed to be plastoquinone. Couples the redox reaction to proton translocation, and thus conserves the redox energy in a proton gradient. Cyanobacterial NDH-1 also plays a role in inorganic carbon-concentration. This chain is NAD(P)H-quinone oxidoreductase subunit L, found in Prochlorococcus marinus (strain MIT 9303).